Reading from the N-terminus, the 158-residue chain is Non-secretory ribonuclease (158 aa).

The first 27 residues, 1-27 (MVPKLFTSQICVLLLFGLLSVEVSLQV), serve as a signal peptide directing secretion. A glycan (C-linked (Man) tryptophan) is linked at W34. H42 functions as the Proton acceptor in the catalytic mechanism. 4 cysteine pairs are disulfide-bonded: C50/C110, C64/C121, C82/C136, and C89/C98. At Y60 the chain carries 3'-nitrotyrosine. Substrate is bound at residue 65–69 (KNQNT). N-linked (GlcNAc...) asparagine glycosylation is found at N86, N92, and N111. H153 (proton donor) is an active-site residue.

The protein belongs to the pancreatic ribonuclease family. As to quaternary structure, interacts with and forms a tight 1:1 complex with RNH1. Dimerization of two such complexes may occur.

Its subcellular location is the lysosome. It localises to the cytoplasmic granule. The enzyme catalyses an [RNA] containing cytidine + H2O = an [RNA]-3'-cytidine-3'-phosphate + a 5'-hydroxy-ribonucleotide-3'-[RNA].. It catalyses the reaction an [RNA] containing uridine + H2O = an [RNA]-3'-uridine-3'-phosphate + a 5'-hydroxy-ribonucleotide-3'-[RNA].. Functionally, this is a non-secretory ribonuclease. It is a pyrimidine specific nuclease with a slight preference for U. Cytotoxin and helminthotoxin. Possesses a wide variety of biological activities. This chain is Non-secretory ribonuclease (RNASE2), found in Saguinus oedipus (Cotton-top tamarin).